The chain runs to 179 residues: MSPEEYVRVWPDSGDLGGTELTLALPGTPTNASEGPKKFGNKRRFLETVDLKLGEAHENNYISSMVTNDQLVGWPPVATARKTVRRKYVKVALDGAAYLRKVDLGMYDCYGQLFTALENMFQGIITICRVTELERKGEFVATYEDKDGDLMLVGDVPWMMFVESCKRMRLMKTGDAIGL.

Residues Leu-21–Leu-25 carry the EAR-like (transcriptional repression) motif. The PB1 domain occupies Arg-86–Thr-173.

It belongs to the Aux/IAA family. As to quaternary structure, homodimers and heterodimers.

It is found in the nucleus. Functionally, aux/IAA proteins are short-lived transcriptional factors that function as repressors of early auxin response genes at low auxin concentrations. Repression is thought to result from the interaction with auxin response factors (ARFs), proteins that bind to the auxin-responsive promoter element (AuxRE). Formation of heterodimers with ARF proteins may alter their ability to modulate early auxin response genes expression. In Arabidopsis thaliana (Mouse-ear cress), this protein is Auxin-responsive protein IAA15 (IAA15).